The primary structure comprises 197 residues: Imidazoleglycerol-phosphate dehydratase (197 aa).

This sequence belongs to the imidazoleglycerol-phosphate dehydratase family.

Its subcellular location is the cytoplasm. It catalyses the reaction D-erythro-1-(imidazol-4-yl)glycerol 3-phosphate = 3-(imidazol-4-yl)-2-oxopropyl phosphate + H2O. The protein operates within amino-acid biosynthesis; L-histidine biosynthesis; L-histidine from 5-phospho-alpha-D-ribose 1-diphosphate: step 6/9. This chain is Imidazoleglycerol-phosphate dehydratase, found in Bradyrhizobium sp. (strain BTAi1 / ATCC BAA-1182).